Reading from the N-terminus, the 286-residue chain is ATP synthase gamma chain (286 aa).

It belongs to the ATPase gamma chain family. F-type ATPases have 2 components, CF(1) - the catalytic core - and CF(0) - the membrane proton channel. CF(1) has five subunits: alpha(3), beta(3), gamma(1), delta(1), epsilon(1). CF(0) has three main subunits: a, b and c.

The protein resides in the cell inner membrane. Its function is as follows. Produces ATP from ADP in the presence of a proton gradient across the membrane. The gamma chain is believed to be important in regulating ATPase activity and the flow of protons through the CF(0) complex. The sequence is that of ATP synthase gamma chain from Pseudoalteromonas atlantica (strain T6c / ATCC BAA-1087).